The following is a 616-amino-acid chain: Chaperone protein HtpG (616 aa).

The interval Met1 to Arg333 is a; substrate-binding. A b region spans residues Glu334–Lys542. The tract at residues Ile543–Leu616 is c.

This sequence belongs to the heat shock protein 90 family. In terms of assembly, homodimer.

It localises to the cytoplasm. Its function is as follows. Molecular chaperone. Has ATPase activity. In Borrelia garinii subsp. bavariensis (strain ATCC BAA-2496 / DSM 23469 / PBi) (Borreliella bavariensis), this protein is Chaperone protein HtpG.